We begin with the raw amino-acid sequence, 590 residues long: MALLQSSLIWVVYAIVFFLLVAVSSIFIYIYQTPSERSTYVTTVCIFTLTALLATVLLLPVDVALVSSTTSSREGRRKSWATQDEVDKITFSLAVAYYFLYSLDAVLCLLVVPFTYFWYEEYDEVASEDGSQTFRKRFWGAFKYTVAFILLTVILFLVGFFVPIGRRKDKPNLDLDYFRRLLTENHGERALTFALGLLITIGILVYVLYTSTGLALLPVTIIKSAPAISSPTLSANTASRLEENIERQRQLEGRCGGNPDRLPSKQRRELDSLVRQARTLRRRQRLAEEARRPSGSWLLNAWFKLSAVFRPLKLLSGLLLLAIAMLVWVSMLLTSIDKAMNSICKQNCGYILGKTNILNPINWVFVHSSKVFPVDYILFVFLVLVFFCSSVVGIATTGIRFLWVRIFQLRKGHTSPQALLITTVMLTLITLALNYSISMVVAPQYATYGPQTFCDHPPKHPGEQPDCTGLEPLIKPCSELSENPTAKEICTPTVVSTFLNRITLNFPFFGIVDFWAQFFFLGLSLLVFLVTIFRTPKLDEQQFDEDAEAAEEEGLLASTGRRFGATWEDITGRASRSPQVSGSAGRGTRE.

The next 10 membrane-spanning stretches (helical) occupy residues 8–28 (LIWV…SIFI), 46–66 (IFTL…VALV), 94–114 (AVAY…VVPF), 145–165 (TVAF…VPIG), 190–210 (ALTF…VLYT), 314–334 (LLSG…MLLT), 348–367 (CGYI…VFVH), 376–396 (YILF…GIAT), 421–441 (ITTV…SMVV), and 508–528 (FFGI…LLVF). A disordered region spans residues 567-590 (WEDITGRASRSPQVSGSAGRGTRE).

Belongs to the LIMR family. LMBRD1 subfamily.

It localises to the lysosome membrane. Functionally, probable lysosomal cobalamin transporter. Required to export cobalamin from lysosomes allowing its conversion to cofactors. This is Probable lysosomal cobalamin transporter from Ajellomyces capsulatus (strain NAm1 / WU24) (Darling's disease fungus).